A 355-amino-acid polypeptide reads, in one-letter code: Guanine nucleotide-binding protein alpha-12 subunit (355 aa).

A G-alpha domain is found at 28-355 (RQINLLLLGS…EQNLKTLMMQ (328 aa)). The interval 31–44 (NLLLLGSGESGKST) is G1 motif. GTP is bound by residues 36 to 43 (GSGESGKS), 176 to 182 (LFCRKAT), 201 to 205 (DVGGQ), 270 to 273 (NKND), and Ala327. Positions 43 and 182 each coordinate Mg(2+). The G2 motif stretch occupies residues 174–182 (DILFCRKAT). Residues 197 to 206 (FRFIDVGGQR) form a G3 motif region. Residues 266-273 (ILFMNKND) are G4 motif. Positions 325 to 330 (TTAVDT) are G5 motif.

Belongs to the G-alpha family. In terms of assembly, g proteins are composed of 3 units; alpha, beta and gamma. The alpha chain contains the guanine nucleotide binding site.

Its function is as follows. Guanine nucleotide-binding proteins (G proteins) are involved as modulators or transducers in various transmembrane signaling systems. May play a role in resistance to fungal infection in the epidermis by regulating the up-regulation of several antimicrobial peptides of the NLP and CNC families. Upstream of plc-3, tpa-1 and the p38-like pathway, required for the expression of antimicrobial peptide nlp-29 in the epidermis in response to fungal infection or physical injury. The sequence is that of Guanine nucleotide-binding protein alpha-12 subunit (gpa-12) from Caenorhabditis elegans.